The primary structure comprises 371 residues: Cytochrome b (371 aa).

Helical transmembrane passes span 25–45 (FGSMLLTCLALQVLTGFFLAV), 69–90 (WMMQNLHAIGASMFFICIYIHI), 105–125 (WMSGITLLITLMATAFFGYVL), and 170–190 (FFALHFILPFAIISLSSLHII). Positions 75 and 89 each coordinate heme b. Heme b is bound by residues histidine 174 and histidine 188. Residue histidine 193 coordinates a ubiquinone. The next 4 helical transmembrane spans lie at 218-238 (YKDLLLLTLMILFLFIIVSFF), 280-300 (LGGALALVMSIMILFTIPFMH), 312-332 (LSQLMFWTLVSTFITITWAAT), and 339-358 (YIMISQMTATLYFTFFLSIP).

This sequence belongs to the cytochrome b family. As to quaternary structure, the cytochrome bc1 complex contains 3 respiratory subunits (MT-CYB, CYC1 and UQCRFS1), 2 core proteins (UQCRC1 and UQCRC2) and probably 6 low-molecular weight proteins. It depends on heme b as a cofactor.

The protein resides in the mitochondrion inner membrane. In terms of biological role, component of the ubiquinol-cytochrome c reductase complex (complex III or cytochrome b-c1 complex) that is part of the mitochondrial respiratory chain. The b-c1 complex mediates electron transfer from ubiquinol to cytochrome c. Contributes to the generation of a proton gradient across the mitochondrial membrane that is then used for ATP synthesis. This chain is Cytochrome b (MT-CYB), found in Simalia amethistina (Amethystine python).